The following is a 250-amino-acid chain: Ribonuclease HII (250 aa).

Residues 66-250 (QLVAGVDEVG…TFAPVSDFFK (185 aa)) enclose the RNase H type-2 domain. A divalent metal cation contacts are provided by Asp-72, Glu-73, and Asp-164.

This sequence belongs to the RNase HII family. Requires Mn(2+) as cofactor. The cofactor is Mg(2+).

It localises to the cytoplasm. The catalysed reaction is Endonucleolytic cleavage to 5'-phosphomonoester.. In terms of biological role, endonuclease that specifically degrades the RNA of RNA-DNA hybrids. In Lactobacillus acidophilus (strain ATCC 700396 / NCK56 / N2 / NCFM), this protein is Ribonuclease HII.